Consider the following 434-residue polypeptide: Nicotinate phosphoribosyltransferase (434 aa).

A Phosphohistidine; by autocatalysis modification is found at histidine 242.

The protein belongs to the NAPRTase family. Transiently phosphorylated on a His residue during the reaction cycle. Phosphorylation strongly increases the affinity for substrates and increases the rate of nicotinate D-ribonucleotide production. Dephosphorylation regenerates the low-affinity form of the enzyme, leading to product release.

The enzyme catalyses nicotinate + 5-phospho-alpha-D-ribose 1-diphosphate + ATP + H2O = nicotinate beta-D-ribonucleotide + ADP + phosphate + diphosphate. It functions in the pathway cofactor biosynthesis; NAD(+) biosynthesis; nicotinate D-ribonucleotide from nicotinate: step 1/1. Catalyzes the synthesis of beta-nicotinate D-ribonucleotide from nicotinate and 5-phospho-D-ribose 1-phosphate at the expense of ATP. In Brucella canis (strain ATCC 23365 / NCTC 10854 / RM-666), this protein is Nicotinate phosphoribosyltransferase.